Reading from the N-terminus, the 358-residue chain is Vanillin synthase (358 aa).

Positions 1–21 (MARLLLLLVGVLIACAAGARA) are cleaved as a signal peptide. Positions 22–140 (GSEFLAEDNP…RGNHKLTSAI (119 aa)) are cleaved as a propeptide — activation peptide. Residue Asn125 is glycosylated (N-linked (GlcNAc...) asparagine). 2 disulfide bridges follow: Cys162-Cys205 and Cys196-Cys238. The active site involves Cys165. A glycan (N-linked (GlcNAc...) asparagine) is linked at Asn254. Cys296 and Cys346 form a disulfide bridge. Residues His305 and Asn325 contribute to the active site.

It belongs to the peptidase C1 family.

It carries out the reaction (E)-ferulate + H2O = vanillin + acetate. It catalyses the reaction 4-O-beta-D-glucosyl-trans-ferulate + H2O = 4-O-beta-D-glucosyl-vanillin + acetate. Its pathway is aromatic compound metabolism; phenylpropanoid biosynthesis. In terms of biological role, involved in the biosynthesis of vanillin and derivative natural products. Catalyzes the double carbon bond cleavage of ferulic acid to vanillin and of respective glucosides. The sequence is that of Vanillin synthase from Glechoma hederacea (Ground-ivy).